Reading from the N-terminus, the 187-residue chain is Ubiquinol-cytochrome c reductase iron-sulfur subunit (187 aa).

Residues 15–35 form a helical membrane-spanning segment; that stretch reads LYYATAGAGAVATGAAVWPLI. A Rieske domain is found at 89–185; that stretch reads QLGQLVDTNA…AKFIDETTIQ (97 aa). [2Fe-2S] cluster contacts are provided by Cys-129, His-131, Cys-149, and His-152. Cys-134 and Cys-151 are oxidised to a cystine.

It belongs to the Rieske iron-sulfur protein family. As to quaternary structure, the main subunits of complex b-c1 are: cytochrome b, cytochrome c1 and the Rieske protein. Requires [2Fe-2S] cluster as cofactor.

It is found in the cell membrane. It carries out the reaction a quinol + 2 Fe(III)-[cytochrome c](out) = a quinone + 2 Fe(II)-[cytochrome c](out) + 2 H(+)(out). Component of the ubiquinol-cytochrome c reductase complex (complex III or cytochrome b-c1 complex), which is a respiratory chain that generates an electrochemical potential coupled to ATP synthesis. The polypeptide is Ubiquinol-cytochrome c reductase iron-sulfur subunit (petA) (Cereibacter sphaeroides (Rhodobacter sphaeroides)).